The following is a 230-amino-acid chain: Flagellar L-ring protein (230 aa).

A signal peptide spans 1-21 (MMLKTVLRLPVCAALLALAAG). A lipid anchor (N-palmitoyl cysteine) is attached at C22. The S-diacylglycerol cysteine moiety is linked to residue C22. A disordered region spans residues 34 to 53 (PLTAPPPPPPQPSARPNGSI). Residues 36–46 (TAPPPPPPQPS) show a composition bias toward pro residues.

This sequence belongs to the FlgH family. As to quaternary structure, the basal body constitutes a major portion of the flagellar organelle and consists of four rings (L,P,S, and M) mounted on a central rod.

Its subcellular location is the cell outer membrane. It is found in the bacterial flagellum basal body. Assembles around the rod to form the L-ring and probably protects the motor/basal body from shearing forces during rotation. The polypeptide is Flagellar L-ring protein (Bordetella bronchiseptica (strain ATCC BAA-588 / NCTC 13252 / RB50) (Alcaligenes bronchisepticus)).